Reading from the N-terminus, the 212-residue chain is ATP phosphoribosyltransferase (212 aa).

This sequence belongs to the ATP phosphoribosyltransferase family. Short subfamily. In terms of assembly, heteromultimer composed of HisG and HisZ subunits.

Its subcellular location is the cytoplasm. The enzyme catalyses 1-(5-phospho-beta-D-ribosyl)-ATP + diphosphate = 5-phospho-alpha-D-ribose 1-diphosphate + ATP. The protein operates within amino-acid biosynthesis; L-histidine biosynthesis; L-histidine from 5-phospho-alpha-D-ribose 1-diphosphate: step 1/9. Functionally, catalyzes the condensation of ATP and 5-phosphoribose 1-diphosphate to form N'-(5'-phosphoribosyl)-ATP (PR-ATP). Has a crucial role in the pathway because the rate of histidine biosynthesis seems to be controlled primarily by regulation of HisG enzymatic activity. In Halalkalibacterium halodurans (strain ATCC BAA-125 / DSM 18197 / FERM 7344 / JCM 9153 / C-125) (Bacillus halodurans), this protein is ATP phosphoribosyltransferase (hisG).